We begin with the raw amino-acid sequence, 95 residues long: Aspartyl/glutamyl-tRNA(Asn/Gln) amidotransferase subunit C (95 aa).

Belongs to the GatC family. In terms of assembly, heterotrimer of A, B and C subunits.

It catalyses the reaction L-glutamyl-tRNA(Gln) + L-glutamine + ATP + H2O = L-glutaminyl-tRNA(Gln) + L-glutamate + ADP + phosphate + H(+). The enzyme catalyses L-aspartyl-tRNA(Asn) + L-glutamine + ATP + H2O = L-asparaginyl-tRNA(Asn) + L-glutamate + ADP + phosphate + 2 H(+). Allows the formation of correctly charged Asn-tRNA(Asn) or Gln-tRNA(Gln) through the transamidation of misacylated Asp-tRNA(Asn) or Glu-tRNA(Gln) in organisms which lack either or both of asparaginyl-tRNA or glutaminyl-tRNA synthetases. The reaction takes place in the presence of glutamine and ATP through an activated phospho-Asp-tRNA(Asn) or phospho-Glu-tRNA(Gln). The polypeptide is Aspartyl/glutamyl-tRNA(Asn/Gln) amidotransferase subunit C (Chelativorans sp. (strain BNC1)).